A 227-amino-acid chain; its full sequence is PKHD-type hydroxylase BURPS668_A1690 (227 aa).

One can recognise a Fe2OG dioxygenase domain in the interval 78-178 (KVFPPLFNRY…RVASFFWIQS (101 aa)). 3 residues coordinate Fe cation: His96, Asp98, and His159. 2-oxoglutarate is bound at residue Arg169.

The cofactor is Fe(2+). L-ascorbate serves as cofactor.

The protein is PKHD-type hydroxylase BURPS668_A1690 of Burkholderia pseudomallei (strain 668).